Reading from the N-terminus, the 362-residue chain is RING finger protein 32 (362 aa).

Residues 127–169 form an RING-type 1; atypical zinc finger; the sequence is CPICKEEFELRPQVLLSCSHVFHRACLQAFEKFTNKKTCPLCR. One can recognise an IQ domain in the interval 186-215; sequence RIKCVTRIQAYWRGYVVRKWYRNLRETVPP. Residues 293-352 form an RING-type 2; atypical zinc finger; sequence CSICLAPLSPAGGQRVGAGQRSRETALLSCSHVFHHACLLALEEFSVGDRPPFHACPLCR.

Its subcellular location is the cytoplasm. May play a role in sperm formation. This is RING finger protein 32 (RNF32) from Macaca fascicularis (Crab-eating macaque).